A 1454-amino-acid chain; its full sequence is ABC transporter G family member 39 (1454 aa).

The region spanning 175-448 (LGFFHLLPSK…FEYFGFQCPE (274 aa)) is the ABC transporter 1 domain. 208–215 (GPPSSGKT) serves as a coordination point for ATP. The ABC transmembrane type-2 1 domain occupies 526-739 (ELFKACFDRE…GQTAIVMNEF (214 aa)). 7 helical membrane passes run 544-564 (FVYV…MTVY), 584-604 (MFFS…FTVM), 623-643 (FALP…GIWI), 663-683 (LLAY…LGAI), 689-709 (ISNS…GFII), 716-736 (PWMT…AIVM), and 775-795 (FWIC…FYIL). Positions 812 to 824 (EEGKDKQKGENRG) are enriched in basic and acidic residues. Residues 812–838 (EEGKDKQKGENRGTEGSVVELNSSSNK) are disordered. The region spanning 853 to 1106 (LAFNNVNYYV…LVEYFEAVEG (254 aa)) is the ABC transporter 2 domain. Position 898–905 (898–905 (GVSGAGKT)) interacts with ATP. In terms of domain architecture, ABC transmembrane type-2 2 spans 1178–1392 (TQTKACFWKQ…TLYGLITSQV (215 aa)). 7 consecutive transmembrane segments (helical) span residues 1199–1219 (AIRF…FWQI), 1231–1251 (NFFG…AATV), 1285–1303 (IMYN…YSMI), 1312–1332 (FLWF…YGMM), 1342–1362 (IAGI…GFLI), 1367–1387 (IPIW…LYGL), and 1423–1443 (FLPV…FVFA).

It belongs to the ABC transporter superfamily. ABCG family. PDR (TC 3.A.1.205) subfamily.

Its subcellular location is the membrane. Functionally, may be a general defense protein. The protein is ABC transporter G family member 39 (ABCG39) of Arabidopsis thaliana (Mouse-ear cress).